The following is a 142-amino-acid chain: Hemoglobin subunit epsilon (142 aa).

Positions 3 to 142 constitute a Globin domain; that stretch reads HFTAEEKAAI…KLVSAVAIAL (140 aa). Phosphoserine is present on residues serine 14 and serine 51. Heme b-binding residues include histidine 64 and histidine 93.

This sequence belongs to the globin family. In terms of assembly, heterotetramer of two alpha chains and two epsilon chains in early embryonic hemoglobin Gower-2; two zeta chains and two epsilon chains in early embryonic hemoglobin Gower-1. In terms of tissue distribution, red blood cells.

The epsilon chain is a beta-type chain of early mammalian embryonic hemoglobin. In Callithrix geoffroyi (Geoffroy's marmoset), this protein is Hemoglobin subunit epsilon (HBE1).